A 150-amino-acid polypeptide reads, in one-letter code: Arginine repressor (150 aa).

Belongs to the ArgR family.

It localises to the cytoplasm. Its pathway is amino-acid biosynthesis; L-arginine biosynthesis [regulation]. Functionally, regulates arginine biosynthesis genes. The polypeptide is Arginine repressor (Desulfitobacterium hafniense (strain DSM 10664 / DCB-2)).